Consider the following 334-residue polypeptide: 2,3-bisphosphoglycerate-dependent phosphoglycerate mutase 1 (334 aa).

A chloroplast-targeting transit peptide spans 1–48 (MATATSHQSVVSFASLRSSPSSTISQCGFKIDSSLSFTSKKTNFCKIK). Substrate contacts are provided by residues 84–91 (RHGESLWN), 97–98 (TG), Arg-134, 188–191 (ERMY), Lys-199, 215–216 (RR), and 259–260 (GN). The Tele-phosphohistidine intermediate role is filled by His-85. The active-site Proton donor/acceptor is Glu-188.

Belongs to the phosphoglycerate mutase family. BPG-dependent PGAM subfamily.

It localises to the plastid. The protein localises to the chloroplast. It catalyses the reaction (2R)-2-phosphoglycerate = (2R)-3-phosphoglycerate. The protein operates within carbohydrate degradation; glycolysis; pyruvate from D-glyceraldehyde 3-phosphate: step 3/5. Catalyzes the interconversion of 2-phosphoglycerate and 3-phosphoglycerate. The polypeptide is 2,3-bisphosphoglycerate-dependent phosphoglycerate mutase 1 (Arabidopsis thaliana (Mouse-ear cress)).